Reading from the N-terminus, the 156-residue chain is Endoribonuclease YbeY (156 aa).

3 residues coordinate Zn(2+): His122, His126, and His132.

Belongs to the endoribonuclease YbeY family. The cofactor is Zn(2+).

It is found in the cytoplasm. Functionally, single strand-specific metallo-endoribonuclease involved in late-stage 70S ribosome quality control and in maturation of the 3' terminus of the 16S rRNA. The polypeptide is Endoribonuclease YbeY (Geobacillus kaustophilus (strain HTA426)).